Consider the following 374-residue polypeptide: Peptide chain release factor 2 (374 aa).

Q250 is modified (N5-methylglutamine).

This sequence belongs to the prokaryotic/mitochondrial release factor family. Post-translationally, methylated by PrmC. Methylation increases the termination efficiency of RF2.

It is found in the cytoplasm. Peptide chain release factor 2 directs the termination of translation in response to the peptide chain termination codons UGA and UAA. The polypeptide is Peptide chain release factor 2 (Roseobacter denitrificans (strain ATCC 33942 / OCh 114) (Erythrobacter sp. (strain OCh 114))).